Reading from the N-terminus, the 153-residue chain is Riboflavin synthase (153 aa).

The protein belongs to the DMRL synthase family.

It carries out the reaction 2 6,7-dimethyl-8-(1-D-ribityl)lumazine + H(+) = 5-amino-6-(D-ribitylamino)uracil + riboflavin. The protein operates within cofactor biosynthesis; riboflavin biosynthesis; riboflavin from 2-hydroxy-3-oxobutyl phosphate and 5-amino-6-(D-ribitylamino)uracil: step 2/2. The sequence is that of Riboflavin synthase (ribC) from Archaeoglobus fulgidus (strain ATCC 49558 / DSM 4304 / JCM 9628 / NBRC 100126 / VC-16).